The sequence spans 239 residues: Serine protease SplF (239 aa).

The N-terminal stretch at 1-36 is a signal peptide; that stretch reads MNKNIIIKSIAALTILTSITGVGTTMVEGIQQTAKA. Catalysis depends on charge relay system residues H75, D114, and S192.

Belongs to the peptidase S1B family.

Its subcellular location is the secreted. The sequence is that of Serine protease SplF (splF) from Staphylococcus aureus (strain NCTC 8325 / PS 47).